Reading from the N-terminus, the 481-residue chain is Cysteine--tRNA ligase (481 aa).

Cys-43 serves as a coordination point for Zn(2+). Positions Ala-45–His-55 match the 'HIGH' region motif. Positions 221, 246, and 250 each coordinate Zn(2+). The 'KMSKS' region signature appears at Lys-277–Ser-281. ATP is bound at residue Lys-280.

This sequence belongs to the class-I aminoacyl-tRNA synthetase family. Monomer. Zn(2+) serves as cofactor.

It localises to the cytoplasm. The catalysed reaction is tRNA(Cys) + L-cysteine + ATP = L-cysteinyl-tRNA(Cys) + AMP + diphosphate. The protein is Cysteine--tRNA ligase of Mycobacterium sp. (strain KMS).